The following is a 340-amino-acid chain: L-threonine 3-dehydrogenase (340 aa).

Residue C38 coordinates Zn(2+). Residues T40 and H43 each act as charge relay system in the active site. Residues H63, E64, C93, C96, C99, and C107 each coordinate Zn(2+). NAD(+) contacts are provided by residues I175, D195, R200, 261–263 (LGI), and 285–286 (IY).

The protein belongs to the zinc-containing alcohol dehydrogenase family. Homotetramer. Zn(2+) serves as cofactor.

The protein localises to the cytoplasm. The enzyme catalyses L-threonine + NAD(+) = (2S)-2-amino-3-oxobutanoate + NADH + H(+). It participates in amino-acid degradation; L-threonine degradation via oxydo-reductase pathway; glycine from L-threonine: step 1/2. In terms of biological role, catalyzes the NAD(+)-dependent oxidation of L-threonine to 2-amino-3-ketobutyrate. The sequence is that of L-threonine 3-dehydrogenase from Xanthomonas euvesicatoria pv. vesicatoria (strain 85-10) (Xanthomonas campestris pv. vesicatoria).